The sequence spans 75 residues: Large ribosomal subunit protein bL28 (75 aa).

The protein belongs to the bacterial ribosomal protein bL28 family.

The polypeptide is Large ribosomal subunit protein bL28 (Buchnera aphidicola subsp. Acyrthosiphon pisum (strain 5A)).